The sequence spans 345 residues: Anthranilate phosphoribosyltransferase (345 aa).

Residues glycine 79, 82–83, threonine 87, 89–92, 106–114, and serine 118 each bind 5-phospho-alpha-D-ribose 1-diphosphate; these read GD, NVST, and KHGNRAVSG. Glycine 79 is an anthranilate binding site. Serine 91 contacts Mg(2+). Anthranilate is bound at residue asparagine 109. Arginine 164 contributes to the anthranilate binding site. Residues aspartate 223 and glutamate 224 each coordinate Mg(2+).

Belongs to the anthranilate phosphoribosyltransferase family. Homodimer. Requires Mg(2+) as cofactor.

The catalysed reaction is N-(5-phospho-beta-D-ribosyl)anthranilate + diphosphate = 5-phospho-alpha-D-ribose 1-diphosphate + anthranilate. It participates in amino-acid biosynthesis; L-tryptophan biosynthesis; L-tryptophan from chorismate: step 2/5. Catalyzes the transfer of the phosphoribosyl group of 5-phosphorylribose-1-pyrophosphate (PRPP) to anthranilate to yield N-(5'-phosphoribosyl)-anthranilate (PRA). The protein is Anthranilate phosphoribosyltransferase of Saccharolobus islandicus (strain L.S.2.15 / Lassen #1) (Sulfolobus islandicus).